Here is a 584-residue protein sequence, read N- to C-terminus: Long-chain-fatty-acid--AMP ligase FadD26 (584 aa).

This sequence belongs to the ATP-dependent AMP-binding enzyme family.

It catalyses the reaction holo-[(phenol)carboxyphthiodiolenone synthase] + a long-chain fatty acid + ATP = a long-chain fatty acyl-[(phenol)carboxyphthiodiolenone synthase] + AMP + diphosphate. The catalysed reaction is eicosanoate + holo-[(phenol)carboxyphthiodiolenone synthase] + ATP = icosanoyl-[(phenol)carboxyphthiodiolenone synthase] + AMP + diphosphate. It carries out the reaction holo-[(phenol)carboxyphthiodiolenone synthase] + docosanoate + ATP = docosanoyl-[(phenol)carboxyphthiodiolenone synthase] + AMP + diphosphate. It functions in the pathway lipid metabolism; fatty acid biosynthesis. Catalyzes the activation of long-chain fatty acids as acyl-adenylates (acyl-AMP), which are then transferred to the multifunctional polyketide synthase PpsA for further chain extension. Catalyzes the adenylation of the long-chain fatty acids eicosanoate (C20) or docosanoate (C22), and potentially the very-long-chain fatty acid lignocerate (C24). Involved in the biosynthesis of phthiocerol dimycocerosate (DIM A) and phthiodiolone dimycocerosate (DIM B). This is Long-chain-fatty-acid--AMP ligase FadD26 from Mycobacterium marinum (strain ATCC BAA-535 / M).